A 396-amino-acid polypeptide reads, in one-letter code: Protein TOC75-4, chloroplastic (396 aa).

The Chloroplast intermembrane segment spans residues 1 to 23 (MEAVKEAVRKIKSLVIPHADEKD). The beta stranded transmembrane segment at 24 to 32 (NGIVFEIKL) threads the bilayer. The Cytoplasmic segment spans residues 33 to 87 (NETDQRVEKWGLDPSLDFFEVTGNCNLGRPNSEGSNQSLMGSVTIRNIFNPKLDD). The chain crosses the membrane as a beta stranded span at residues 88–96 (LLSKIEYVR). Topologically, residues 97 to 140 (FLEAVKKPRNRTFKTSFFNSRKLSPVFTGGPGYEDLVPPMFVGR) are chloroplast intermembrane. A beta stranded transmembrane segment spans residues 141–148 (DCLKATIT). Residues 149–156 (ENLTRQRE) are Cytoplasmic-facing. The chain crosses the membrane as a beta stranded span at residues 157–164 (LTYGVMFE). Over 165–271 (EIITRDENRR…VEEGSDKPQP (107 aa)) the chain is Chloroplast intermembrane. The chain crosses the membrane as a beta stranded span at residues 272 to 280 (PVLVLHGRY). Over 281 to 292 (GGCIGDLPSYDV) the chain is Cytoplasmic. Residues 293 to 301 (FALGGPNSV) traverse the membrane as a beta stranded segment. At 302–363 (RGYSMGELGA…LYRKMGHGSS (62 aa)) the chain is on the chloroplast intermembrane side. Residues 364-370 (YGLGVKL) traverse the membrane as a beta stranded segment. The Cytoplasmic segment spans residues 371–384 (GMVRAEYTVRHNRG). A beta stranded membrane pass occupies residues 385 to 392 (TGALFLRF). The Chloroplast intermembrane portion of the chain corresponds to 393-396 (GERY).

The protein belongs to the TOC75 family. As to quaternary structure, part of the TOC core complex that includes a protein for the specific recognition of transit peptides surrounded by a ring composed of four proteins forming translocation channels, and four to five GTP-binding proteins providing energy. This core complex can interact with components of the TIC complex to form a larger import complex. Chloroplastic protein precursors also interacts with these complexes. Expressed ubiquitously at low levels.

It localises to the plastid. The protein resides in the chloroplast outer membrane. In terms of biological role, mediates the insertion of proteins targeted to the outer membrane of chloroplasts. Required for the import of protein precursors into chloroplasts. Forms the voltage-dependent preprotein translocation channels (hydrophilic beta barrel) of the TOC complex in the chloroplastic outer membrane. Required for etioplast formation and/or etioplast-chloroplast transition during deetiolation. In Arabidopsis thaliana (Mouse-ear cress), this protein is Protein TOC75-4, chloroplastic (TOC75-4).